Consider the following 110-residue polypeptide: DNA-directed RNA polymerase subunit omega (110 aa).

It belongs to the RNA polymerase subunit omega family. As to quaternary structure, the RNAP catalytic core consists of 2 alpha, 1 beta, 1 beta' and 1 omega subunit. When a sigma factor is associated with the core the holoenzyme is formed, which can initiate transcription.

The enzyme catalyses RNA(n) + a ribonucleoside 5'-triphosphate = RNA(n+1) + diphosphate. Promotes RNA polymerase assembly. Latches the N- and C-terminal regions of the beta' subunit thereby facilitating its interaction with the beta and alpha subunits. The chain is DNA-directed RNA polymerase subunit omega from Nocardioides sp. (strain ATCC BAA-499 / JS614).